The chain runs to 381 residues: 1-deoxy-D-xylulose 5-phosphate reductoisomerase (381 aa).

NADPH is bound by residues serine 10, glycine 11, serine 12, isoleucine 13, glycine 36, lysine 37, asparagine 38, and asparagine 121. Lysine 122 contacts 1-deoxy-D-xylulose 5-phosphate. Glutamate 123 provides a ligand contact to NADPH. Aspartate 147 is a binding site for Mn(2+). 1-deoxy-D-xylulose 5-phosphate-binding residues include serine 148, glutamate 149, serine 173, and histidine 196. Glutamate 149 contributes to the Mn(2+) binding site. Glycine 202 lines the NADPH pocket. Residues serine 209, asparagine 214, lysine 215, and glutamate 218 each contribute to the 1-deoxy-D-xylulose 5-phosphate site. Mn(2+) is bound at residue glutamate 218.

It belongs to the DXR family. It depends on Mg(2+) as a cofactor. Mn(2+) serves as cofactor.

It catalyses the reaction 2-C-methyl-D-erythritol 4-phosphate + NADP(+) = 1-deoxy-D-xylulose 5-phosphate + NADPH + H(+). The protein operates within isoprenoid biosynthesis; isopentenyl diphosphate biosynthesis via DXP pathway; isopentenyl diphosphate from 1-deoxy-D-xylulose 5-phosphate: step 1/6. In terms of biological role, catalyzes the NADPH-dependent rearrangement and reduction of 1-deoxy-D-xylulose-5-phosphate (DXP) to 2-C-methyl-D-erythritol 4-phosphate (MEP). This Geobacillus sp. (strain WCH70) protein is 1-deoxy-D-xylulose 5-phosphate reductoisomerase.